The following is a 221-amino-acid chain: Putative N-acetylmannosamine-6-phosphate 2-epimerase (221 aa).

This sequence belongs to the NanE family.

The catalysed reaction is an N-acyl-D-glucosamine 6-phosphate = an N-acyl-D-mannosamine 6-phosphate. It functions in the pathway amino-sugar metabolism; N-acetylneuraminate degradation; D-fructose 6-phosphate from N-acetylneuraminate: step 3/5. In terms of biological role, converts N-acetylmannosamine-6-phosphate (ManNAc-6-P) to N-acetylglucosamine-6-phosphate (GlcNAc-6-P). In Clostridium perfringens (strain SM101 / Type A), this protein is Putative N-acetylmannosamine-6-phosphate 2-epimerase.